We begin with the raw amino-acid sequence, 269 residues long: Staphylococcal secretory antigen ssaA2 (269 aa).

Positions Met1 to Ala27 are cleaved as a signal peptide. Repeat copies occupy residues Tyr83 to Asn85, Tyr88 to Asn90, Tyr91 to Asn93, Tyr97 to Asn99, Tyr103 to Asn105, Tyr106 to Asn108, and Tyr115 to Asn117. The interval Tyr83–Tyr115 is 7 X 3 AA repeats of Y-[NS]-N. Positions Met148–His269 constitute a Peptidase C51 domain.

Its subcellular location is the secreted. In terms of biological role, not known; immunogenic protein. This Staphylococcus aureus (strain MRSA252) protein is Staphylococcal secretory antigen ssaA2 (ssaA2).